We begin with the raw amino-acid sequence, 210 residues long: Urease accessory protein UreG (210 aa).

GTP is bound at residue 15–22 (GPVGSGKT).

Belongs to the SIMIBI class G3E GTPase family. UreG subfamily. In terms of assembly, homodimer. UreD, UreF and UreG form a complex that acts as a GTP-hydrolysis-dependent molecular chaperone, activating the urease apoprotein by helping to assemble the nickel containing metallocenter of UreC. The UreE protein probably delivers the nickel.

Its subcellular location is the cytoplasm. Facilitates the functional incorporation of the urease nickel metallocenter. This process requires GTP hydrolysis, probably effectuated by UreG. In Ralstonia nicotianae (strain ATCC BAA-1114 / GMI1000) (Ralstonia solanacearum), this protein is Urease accessory protein UreG.